The following is a 482-amino-acid chain: Matrix metalloproteinase-20 (482 aa).

Residues 1–21 (MKVLPASGLAVLVTALKFATA) form the signal peptide. A propeptide spanning residues 22–106 (DPNLLAATPR…PRCGVPDVAN (85 aa)) is cleaved from the precursor. The Cysteine switch signature appears at 97–104 (PRCGVPDV). C99 contributes to the Zn(2+) binding site. Positions 163, 164, and 165 each coordinate Ca(2+). Residues H175 and D177 each coordinate Zn(2+). Ca(2+)-binding residues include D182, G183, R185, and T187. Residue H190 coordinates Zn(2+). Ca(2+)-binding residues include E196, G197, G199, and D201. H203 serves as a coordination point for Zn(2+). The Ca(2+) site is built by D205 and E208. A Zn(2+)-binding site is contributed by H225. Residue E226 is part of the active site. Positions 229 and 235 each coordinate Zn(2+). Hemopexin repeat units follow at residues 292–342 (PDLC…FPQL), 343–388 (MSNV…GFPR), 390–438 (VQRI…FSGV), and 439–482 (SGHI…WIGC). C295 and C482 are disulfide-bonded.

It belongs to the peptidase M10A family. Zn(2+) serves as cofactor. Ca(2+) is required as a cofactor. Autoactivates at least at the 106-Asn-|-Tyr-107 site. As to expression, expressed in the enamel organ.

It localises to the secreted. The protein localises to the extracellular space. It is found in the extracellular matrix. In terms of biological role, degrades amelogenin, the major protein component of the enamel matrix and two of the macromolecules characterizing the cartilage extracellular matrix: aggrecan and the cartilage oligomeric matrix protein (COMP). May play a central role in tooth enamel formation. Cleaves aggrecan at the '360-Asn-|-Phe-361' site. In Mus musculus (Mouse), this protein is Matrix metalloproteinase-20 (Mmp20).